The primary structure comprises 20 residues: Pregnancy-associated glycoprotein 71D (20 aa).

N4 is a glycosylation site (N-linked (GlcNAc...) asparagine).

The protein belongs to the peptidase A1 family. In terms of tissue distribution, chorionic epithelium (trophectoderm) and placental cotyledons.

The protein resides in the secreted. It is found in the extracellular space. In Bison bonasus (European bison), this protein is Pregnancy-associated glycoprotein 71D.